The following is a 77-amino-acid chain: UPF0337 protein CE0198 (77 aa).

The interval 1–77 (MGDLSNKAEG…PDVEHPEAVN (77 aa)) is disordered. Basic and acidic residues-rich tracts occupy residues 30–56 (DEGR…KDGA) and 64–77 (QDKD…EAVN).

It belongs to the UPF0337 (CsbD) family.

The protein is UPF0337 protein CE0198 of Corynebacterium efficiens (strain DSM 44549 / YS-314 / AJ 12310 / JCM 11189 / NBRC 100395).